Consider the following 190-residue polypeptide: Putative manganese efflux pump MntP (190 aa).

The next 6 helical transmembrane spans lie at 3 to 23 (PISLLFLALAMSTDAFAAALG), 41 to 61 (LIFGAIETITPVIGWGIGQVA), 69 to 89 (DHWIAFTLLLVLGLHMIYNGL), 105 to 125 (FWILAVTAFATSIDALAVGVG), 133 to 153 (IMVAALAIGLATTVMVTIGVM), and 168 to 188 (IVGGIVLIVVGTTILYEHLTA).

The protein belongs to the MntP (TC 9.B.29) family.

It localises to the cell inner membrane. Its function is as follows. Probably functions as a manganese efflux pump. The sequence is that of Putative manganese efflux pump MntP from Pseudomonas syringae pv. tomato (strain ATCC BAA-871 / DC3000).